We begin with the raw amino-acid sequence, 325 residues long: Acetyl-coenzyme A carboxylase carboxyl transferase subunit alpha (325 aa).

Positions Glu-35–Gln-292 constitute a CoA carboxyltransferase C-terminal domain.

This sequence belongs to the AccA family. Acetyl-CoA carboxylase is a heterohexamer composed of biotin carboxyl carrier protein (AccB), biotin carboxylase (AccC) and two subunits each of ACCase subunit alpha (AccA) and ACCase subunit beta (AccD).

Its subcellular location is the cytoplasm. It carries out the reaction N(6)-carboxybiotinyl-L-lysyl-[protein] + acetyl-CoA = N(6)-biotinyl-L-lysyl-[protein] + malonyl-CoA. It functions in the pathway lipid metabolism; malonyl-CoA biosynthesis; malonyl-CoA from acetyl-CoA: step 1/1. Its function is as follows. Component of the acetyl coenzyme A carboxylase (ACC) complex. First, biotin carboxylase catalyzes the carboxylation of biotin on its carrier protein (BCCP) and then the CO(2) group is transferred by the carboxyltransferase to acetyl-CoA to form malonyl-CoA. This chain is Acetyl-coenzyme A carboxylase carboxyl transferase subunit alpha, found in Geobacillus thermodenitrificans (strain NG80-2).